We begin with the raw amino-acid sequence, 536 residues long: Aminopeptidase (536 aa).

The signal sequence occupies residues 1-24; the sequence is MSNKNNLRYALGALALSVSAASLA. The PA domain occupies 152–255; sequence AGDVTAKVVP…ATYDNGVAWS (104 aa). Thr-196 is subject to Phosphothreonine. 2 residues coordinate Zn(2+): His-296 and Asp-308. Glu-340 (proton acceptor) is an active-site residue. Glu-341, Asp-369, and His-467 together coordinate Zn(2+). Cys-465 and Cys-470 are oxidised to a cystine.

Belongs to the peptidase M28 family. M28A subfamily. Zn(2+) serves as cofactor.

The protein resides in the secreted. It carries out the reaction Release of an N-terminal amino acid, Xaa-|-Yaa-, in which Xaa is preferably Leu, but may be other amino acids including Pro although not Arg or Lys, and Yaa may be Pro. Amino acid amides and methyl esters are also readily hydrolyzed, but rates on arylamides are exceedingly low.. Its function is as follows. A secreted aminopeptidase. Acts on free N-terminal amino groups with a very strong preference for Leu in the first position. This Pseudomonas aeruginosa (strain UCBPP-PA14) protein is Aminopeptidase.